A 705-amino-acid polypeptide reads, in one-letter code: 1,4-alpha-glucan branching enzyme GlgB (705 aa).

Catalysis depends on Asp309, which acts as the Nucleophile. Glu360 serves as the catalytic Proton donor. The segment at 654-705 is disordered; that stretch reads VQVERAADPRPNEQQRLVAETPAHEGGRSAPADAAESAEQKPDDEQKGGKKA. Basic and acidic residues predominate over residues 691 to 705; it reads AEQKPDDEQKGGKKA.

The protein belongs to the glycosyl hydrolase 13 family. GlgB subfamily. In terms of assembly, monomer.

The catalysed reaction is Transfers a segment of a (1-&gt;4)-alpha-D-glucan chain to a primary hydroxy group in a similar glucan chain.. The protein operates within glycan biosynthesis; glycogen biosynthesis. Catalyzes the formation of the alpha-1,6-glucosidic linkages in glycogen by scission of a 1,4-alpha-linked oligosaccharide from growing alpha-1,4-glucan chains and the subsequent attachment of the oligosaccharide to the alpha-1,6 position. This is 1,4-alpha-glucan branching enzyme GlgB from Deinococcus radiodurans (strain ATCC 13939 / DSM 20539 / JCM 16871 / CCUG 27074 / LMG 4051 / NBRC 15346 / NCIMB 9279 / VKM B-1422 / R1).